We begin with the raw amino-acid sequence, 132 residues long: Large ribosomal subunit protein uL22c (132 aa).

Belongs to the universal ribosomal protein uL22 family. In terms of assembly, part of the 50S ribosomal subunit.

It localises to the plastid. The protein resides in the chloroplast. Functionally, this protein binds specifically to 23S rRNA. In terms of biological role, the globular domain of the protein is located near the polypeptide exit tunnel on the outside of the subunit, while an extended beta-hairpin is found that lines the wall of the exit tunnel in the center of the 70S ribosome. The sequence is that of Large ribosomal subunit protein uL22c (rpl22) from Populus trichocarpa (Western balsam poplar).